A 120-amino-acid chain; its full sequence is Vanadium-binding protein 2 (120 aa).

Residues 1-20 form the signal peptide; that stretch reads MSKVIFALVLVVVLVACINA. Residues 21–29 constitute a propeptide that is removed on maturation; the sequence is TYVEFEEAY. 9 cysteine pairs are disulfide-bonded: Cys-34–Cys-88, Cys-38–Cys-84, Cys-42–Cys-81, Cys-48–Cys-74, Cys-52–Cys-69, Cys-56–Cys-65, Cys-92–Cys-119, Cys-97–Cys-114, and Cys-101–Cys-111.

Interacts with VIP1. As to expression, expressed in vanadocytes.

Its subcellular location is the cytoplasm. In terms of biological role, acts as a vanadium reductase which may form an electron transfer cascade in conjunction with NADPH and glutathione through thiol disulfide exchange reactions. Partial cleavage of its disulfide bonds results in the reduction of V(5+) to V(4+). Binds up to 24 V(4+) ions per protein at pH 7.5. Also binds Fe(3+) and Cu(2+) and, to a lesser extent, Co(2+), Zn(2+) and Ni(2+). The protein is Vanadium-binding protein 2 of Ascidia sydneiensis samea (Vanadium-rich ascidian).